A 183-amino-acid polypeptide reads, in one-letter code: Peptidyl-tRNA hydrolase (183 aa).

Tyrosine 15 contributes to the tRNA binding site. The active-site Proton acceptor is histidine 20. Residues tyrosine 67 and asparagine 69 each coordinate tRNA.

It belongs to the PTH family. In terms of assembly, monomer.

The protein resides in the cytoplasm. The enzyme catalyses an N-acyl-L-alpha-aminoacyl-tRNA + H2O = an N-acyl-L-amino acid + a tRNA + H(+). Hydrolyzes ribosome-free peptidyl-tRNAs (with 1 or more amino acids incorporated), which drop off the ribosome during protein synthesis, or as a result of ribosome stalling. Its function is as follows. Catalyzes the release of premature peptidyl moieties from peptidyl-tRNA molecules trapped in stalled 50S ribosomal subunits, and thus maintains levels of free tRNAs and 50S ribosomes. The protein is Peptidyl-tRNA hydrolase of Chlamydia caviae (strain ATCC VR-813 / DSM 19441 / 03DC25 / GPIC) (Chlamydophila caviae).